The primary structure comprises 474 residues: tRNA-2-methylthio-N(6)-dimethylallyladenosine synthase (474 aa).

Residues 3 to 120 (KKLHIKTWGC…LPEMIDQIEA (118 aa)) enclose the MTTase N-terminal domain. [4Fe-4S] cluster contacts are provided by C12, C49, C83, C157, C161, and C164. Residues 143-375 (RADGPSAFVS…QDRITQQAMR (233 aa)) enclose the Radical SAM core domain. The 64-residue stretch at 378–441 (RQMLGTVQRI…TNSLRGNFIR (64 aa)) folds into the TRAM domain.

Belongs to the methylthiotransferase family. MiaB subfamily. As to quaternary structure, monomer. Requires [4Fe-4S] cluster as cofactor.

The protein resides in the cytoplasm. The catalysed reaction is N(6)-dimethylallyladenosine(37) in tRNA + (sulfur carrier)-SH + AH2 + 2 S-adenosyl-L-methionine = 2-methylsulfanyl-N(6)-dimethylallyladenosine(37) in tRNA + (sulfur carrier)-H + 5'-deoxyadenosine + L-methionine + A + S-adenosyl-L-homocysteine + 2 H(+). Functionally, catalyzes the methylthiolation of N6-(dimethylallyl)adenosine (i(6)A), leading to the formation of 2-methylthio-N6-(dimethylallyl)adenosine (ms(2)i(6)A) at position 37 in tRNAs that read codons beginning with uridine. The chain is tRNA-2-methylthio-N(6)-dimethylallyladenosine synthase from Shewanella woodyi (strain ATCC 51908 / MS32).